An 88-amino-acid chain; its full sequence is Small ribosomal subunit protein uS15 (88 aa).

The protein belongs to the universal ribosomal protein uS15 family. In terms of assembly, part of the 30S ribosomal subunit. Forms a bridge to the 50S subunit in the 70S ribosome, contacting the 23S rRNA.

Its function is as follows. One of the primary rRNA binding proteins, it binds directly to 16S rRNA where it helps nucleate assembly of the platform of the 30S subunit by binding and bridging several RNA helices of the 16S rRNA. Functionally, forms an intersubunit bridge (bridge B4) with the 23S rRNA of the 50S subunit in the ribosome. In Flavobacterium johnsoniae (strain ATCC 17061 / DSM 2064 / JCM 8514 / BCRC 14874 / CCUG 350202 / NBRC 14942 / NCIMB 11054 / UW101) (Cytophaga johnsonae), this protein is Small ribosomal subunit protein uS15.